Consider the following 489-residue polypeptide: Ribulose bisphosphate carboxylase large chain 2 (489 aa).

Substrate-binding residues include Asn-128 and Thr-178. Lys-180 functions as the Proton acceptor in the catalytic mechanism. Lys-182 contributes to the substrate binding site. Residues Lys-206, Asp-208, and Glu-209 each coordinate Mg(2+). Lys-206 carries the N6-carboxylysine modification. His-298 acts as the Proton acceptor in catalysis. Residues Arg-299, His-331, and Ser-383 each coordinate substrate.

Belongs to the RuBisCO large chain family. Type I subfamily. As to quaternary structure, heterohexadecamer of 8 large chains and 8 small chains. Requires Mg(2+) as cofactor.

It carries out the reaction 2 (2R)-3-phosphoglycerate + 2 H(+) = D-ribulose 1,5-bisphosphate + CO2 + H2O. It catalyses the reaction D-ribulose 1,5-bisphosphate + O2 = 2-phosphoglycolate + (2R)-3-phosphoglycerate + 2 H(+). Functionally, ruBisCO catalyzes two reactions: the carboxylation of D-ribulose 1,5-bisphosphate, the primary event in carbon dioxide fixation, as well as the oxidative fragmentation of the pentose substrate. Both reactions occur simultaneously and in competition at the same active site. This Nitrobacter winogradskyi (strain ATCC 25391 / DSM 10237 / CIP 104748 / NCIMB 11846 / Nb-255) protein is Ribulose bisphosphate carboxylase large chain 2.